The chain runs to 977 residues: MSQTPSSLRDLEHHSAFVERHIGPNDAEIAQMLDVVGHASLDALTDAIVPGNIKSPAPLALPEAITEEEALAKIRAIASKNQVQRNFIGQGYYGTHTPKVILRNILENPAWYTAYTPYQAEISQGRMEALINFQTLCADLTGMQIANASLLDEATAAAEAMTLAKRSAKSKSNTFFVHDAVHPQTLELLRTRAEPLDIVLRVGTPEEALQAECFGVLLQYPDSFGHIGDHAALADAVHAQGGLVAVATDLLALTLIAAPGEWGADIVVGNSQRFGVPFGFGGPHAAFMACRDAYKRSMPGRLIGVSIDAAGNPAYRLTLQTREQHIRREKATSNICTAQVLLAVMASMYAVYHGPDGLVRIARRTHRLAAILAAALRSAGVSVGDRFFDTLHVKAIDADAIHARARAAGINLRAIDSEAVGISLDETTTRADVVALAQLFGATADVDALDAATADALPQGLLRTTPFLTHPVFNTHHSEHELLRYMRSLADKDLAMDRTMIPLGSCTMKLNATAEMIPVTWPEFGAIHPLAPAEQSAGYAQLIDELEAMLVECTGYDAVSLQPNSGAQGEYAGLLAIRAYHRSRGQAHRDICLIPESAHGTNPASAQMCGMTVVVTKCDANGNVDVDDIRAKAEKYSDRLAALMITYPSTHGVFEEDVVAICEAVHAHGGQVYTDGANMNALVGVAKPGKWGSDVSHLNLHKTFCIPHGGGGPGVGPCAVKSHLAPYLPRAGIHAGEGQTAAIHGGGFNSESGNGHSSRIGGMVSAAAYGSASILPISWMYVTMMGSAGLRKATQVALLNANYIAKRLAPHYKTLYTGRNGLVAHECILDVRPLEKTSGIGAEDIAKRLIDFGFHAPTLSFPVAGTLMVEPTESESQHELDRFIDAMIQIREEIRAIEDGRLDREDNPLKHAPHTATQVSASEWTHAYPRELAAFPLPSLKQQKYWPPVARVDNVYGDKNVMCACIPVDAYKEDAEA.

An N6-(pyridoxal phosphate)lysine modification is found at lysine 702.

Belongs to the GcvP family. As to quaternary structure, the glycine cleavage system is composed of four proteins: P, T, L and H. Requires pyridoxal 5'-phosphate as cofactor.

The enzyme catalyses N(6)-[(R)-lipoyl]-L-lysyl-[glycine-cleavage complex H protein] + glycine + H(+) = N(6)-[(R)-S(8)-aminomethyldihydrolipoyl]-L-lysyl-[glycine-cleavage complex H protein] + CO2. The glycine cleavage system catalyzes the degradation of glycine. The P protein binds the alpha-amino group of glycine through its pyridoxal phosphate cofactor; CO(2) is released and the remaining methylamine moiety is then transferred to the lipoamide cofactor of the H protein. This Xanthomonas axonopodis pv. citri (strain 306) protein is Glycine dehydrogenase (decarboxylating).